The primary structure comprises 174 residues: Adenine phosphoribosyltransferase (174 aa).

It belongs to the purine/pyrimidine phosphoribosyltransferase family. In terms of assembly, homodimer.

It is found in the cytoplasm. It carries out the reaction AMP + diphosphate = 5-phospho-alpha-D-ribose 1-diphosphate + adenine. It participates in purine metabolism; AMP biosynthesis via salvage pathway; AMP from adenine: step 1/1. Functionally, catalyzes a salvage reaction resulting in the formation of AMP, that is energically less costly than de novo synthesis. In Agathobacter rectalis (strain ATCC 33656 / DSM 3377 / JCM 17463 / KCTC 5835 / VPI 0990) (Eubacterium rectale), this protein is Adenine phosphoribosyltransferase.